Here is a 1053-residue protein sequence, read N- to C-terminus: Translation initiation factor IF-2 (1053 aa).

Positions 1–20 (MSESKNSGENTLSVTPTKTL) are enriched in polar residues. The segment at 1 to 442 (MSESKNSGEN…TATGGEEEER (442 aa)) is disordered. Low complexity-rich tracts occupy residues 64-76 (EAAP…ATVT) and 83-102 (RPAA…AAVP). 2 stretches are compositionally biased toward pro residues: residues 131–141 (PAQPKAEPVPA) and 150–161 (APVPPVPAPSAP). Residues 178 to 220 (PVSQAKPIQTAPVQTAPAAQASASQTTGPRPVAAGPRPATGAA) show a composition bias toward low complexity. Gly residues predominate over residues 255 to 264 (GGRGGPGRGE). Basic and acidic residues-rich tracts occupy residues 279 to 288 (LTDEEREARA) and 295 to 353 (RIRE…EAKR). Residues 375–386 (TATAAAPAAAAP) are compositionally biased toward low complexity. The tr-type G domain maps to 550–720 (PRPPVVTIMG…ALQAELLDLK (171 aa)). The segment at 559–566 (GHVDHGKT) is G1. 559 to 566 (GHVDHGKT) lines the GTP pocket. Residues 584–588 (GITQH) form a G2 region. The interval 606-609 (DTPG) is G3. GTP contacts are provided by residues 606–610 (DTPGH) and 660–663 (NKID). The tract at residues 660-663 (NKID) is G4. The G5 stretch occupies residues 696-698 (SAT).

Belongs to the TRAFAC class translation factor GTPase superfamily. Classic translation factor GTPase family. IF-2 subfamily.

The protein resides in the cytoplasm. Functionally, one of the essential components for the initiation of protein synthesis. Protects formylmethionyl-tRNA from spontaneous hydrolysis and promotes its binding to the 30S ribosomal subunits. Also involved in the hydrolysis of GTP during the formation of the 70S ribosomal complex. The sequence is that of Translation initiation factor IF-2 from Beijerinckia indica subsp. indica (strain ATCC 9039 / DSM 1715 / NCIMB 8712).